A 102-amino-acid chain; its full sequence is Pole-localizer protein TmaR (102 aa).

A coiled-coil region spans residues I7–R34.

This sequence belongs to the pole-localizer TmaR family.

It is found in the cytoplasm. Its function is as follows. Pole-localizer protein involved in the regulation of several cellular processes. This Aliivibrio fischeri (strain ATCC 700601 / ES114) (Vibrio fischeri) protein is Pole-localizer protein TmaR.